Here is a 790-residue protein sequence, read N- to C-terminus: Protein SEY1 (790 aa).

The Cytoplasmic segment spans residues 1-692; it reads MELSEGELSH…KRSIVQHITQ (692 aa). Residues 55-284 form the GB1/RHD3-type G domain; the sequence is GNNYHIISVF…VSNELFKPEY (230 aa). 65–72 serves as a coordination point for GTP; sequence GSQSTGKS. The chain crosses the membrane as a helical span at residues 693–713; sequence IPYYIYLIILVLGWNEFMAII. At 714-716 the chain is on the lumenal side; it reads RNP. A helical transmembrane segment spans residues 717 to 737; sequence LFFSLSIVLGATVYVLYYLGL. Topologically, residues 738 to 790 are cytoplasmic; the sequence is LRPALVVAQRTMDEVIVMAKTKLREVLIDDHEVTGRQLNKMAGSKENIELDDM.

This sequence belongs to the TRAFAC class dynamin-like GTPase superfamily. GB1/RHD3 GTPase family. RHD3 subfamily.

The protein resides in the endoplasmic reticulum membrane. Its function is as follows. Cooperates with the reticulon proteins and tubule-shaping DP1 family proteins to generate and maintain the structure of the tubular endoplasmic reticulum network. Has GTPase activity, which is required for its function in ER organization. This Candida albicans (strain WO-1) (Yeast) protein is Protein SEY1.